The primary structure comprises 200 residues: MEKGLSSDLIIAFVAIVLHVVNYNVTAQFEYKTRYFTKLIGRNAIYYYAVFLIISALIRDHFINVAVLSDKDSIILFPTEIANMIGDSCFIFGILLNIWTLKALGIKGMYNGDSFGHIMDSPVTGGPYQFFSDPQYVGTTIAALGVAIRNQSIYGFLCTILVGVVFYISATFVETPHLKNIYSNRSYSKINFKNLKSLKN.

The Lumenal portion of the chain corresponds to 1 to 8; that stretch reads MEKGLSSD. The segment at residues 9–29 is an intramembrane region (helical); that stretch reads LIIAFVAIVLHVVNYNVTAQF. The Lumenal segment spans residues 30–39; it reads EYKTRYFTKL. Residues 40–58 form a helical membrane-spanning segment; sequence IGRNAIYYYAVFLIISALI. Topologically, residues 59-86 are cytoplasmic; sequence RDHFINVAVLSDKDSIILFPTEIANMIG. The helical transmembrane segment at 87-107 threads the bilayer; the sequence is DSCFIFGILLNIWTLKALGIK. Residue 91–93 coordinates S-adenosyl-L-methionine; that stretch reads IFG. Residues 108–150 are Lumenal-facing; the sequence is GMYNGDSFGHIMDSPVTGGPYQFFSDPQYVGTTIAALGVAIRN. A helical membrane pass occupies residues 151-171; sequence QSIYGFLCTILVGVVFYISAT. Residues 172–200 lie on the Cytoplasmic side of the membrane; it reads FVETPHLKNIYSNRSYSKINFKNLKSLKN. An S-adenosyl-L-methionine-binding site is contributed by 174–175; sequence ET.

Belongs to the class VI-like SAM-binding methyltransferase superfamily. PEMT/PEM2 methyltransferase family.

It localises to the endoplasmic reticulum membrane. It is found in the mitochondrion membrane. It catalyses the reaction a 1,2-diacyl-sn-glycero-3-phospho-N-methylethanolamine + S-adenosyl-L-methionine = a 1,2-diacyl-sn-glycero-3-phospho-N,N-dimethylethanolamine + S-adenosyl-L-homocysteine + H(+). It carries out the reaction a 1,2-diacyl-sn-glycero-3-phospho-N,N-dimethylethanolamine + S-adenosyl-L-methionine = a 1,2-diacyl-sn-glycero-3-phosphocholine + S-adenosyl-L-homocysteine + H(+). The enzyme catalyses a 1,2-diacyl-sn-glycero-3-phosphoethanolamine + S-adenosyl-L-methionine = a 1,2-diacyl-sn-glycero-3-phospho-N-methylethanolamine + S-adenosyl-L-homocysteine + H(+). It participates in phospholipid metabolism; phosphatidylcholine biosynthesis. Catalyzes the three sequential steps of the methylation pathway of phosphatidylcholine biosynthesis, the SAM-dependent methylation of phosphatidylethanolamine (PE) to phosphatidylmonomethylethanolamine (PMME), PMME to phosphatidyldimethylethanolamine (PDME), and PDME to phosphatidylcholine (PC). The protein is Phosphatidylethanolamine N-methyltransferase B (pemtB) of Dictyostelium discoideum (Social amoeba).